Reading from the N-terminus, the 894-residue chain is Mitogen-activated protein kinase kinase kinase kinase 3 (894 aa).

An N-acetylmethionine modification is found at Met1. The Protein kinase domain maps to 16 to 273; the sequence is FELIQRIGSG…AEKLLQHPFV (258 aa). ATP-binding positions include 22–30 and Lys45; that span reads IGSGTYGDV. Asp136 acts as the Proton acceptor in catalysis. Phosphoserine is present on Ser329. The tract at residues 339–358 is disordered; sequence DPPLRKETEPHHELPDSDGF. A compositionally biased stretch (basic and acidic residues) spans 340–353; that stretch reads PPLRKETEPHHELP. At Ser398 the chain carries Phosphoserine. A disordered region spans residues 408–537; that stretch reads HVAHLEDDEG…VPKPISNGLP (130 aa). Over residues 473–487 the composition is skewed to pro residues; that stretch reads HVPPRPPPPRLPPQK. Positions 508–520 are enriched in polar residues; that stretch reads LYQQQSEQRGTNL. Positions 556 to 867 constitute a CNH domain; it reads PLKIHCATSW…IFRLLGSDRV (312 aa).

The protein belongs to the protein kinase superfamily. STE Ser/Thr protein kinase family. STE20 subfamily. As to quaternary structure, interacts with SH3GL2. Interaction appears to regulate MAP4K3-mediated JNK activation. Mg(2+) is required as a cofactor.

The enzyme catalyses L-seryl-[protein] + ATP = O-phospho-L-seryl-[protein] + ADP + H(+). The catalysed reaction is L-threonyl-[protein] + ATP = O-phospho-L-threonyl-[protein] + ADP + H(+). Serine/threonine kinase that plays a role in the response to environmental stress. Appears to act upstream of the JUN N-terminal pathway. Activator of the Hippo signaling pathway which plays a pivotal role in organ size control and tumor suppression by restricting proliferation and promoting apoptosis. MAP4Ks act in parallel to and are partially redundant with STK3/MST2 and STK4/MST2 in the phosphorylation and activation of LATS1/2, and establish MAP4Ks as components of the expanded Hippo pathway. This is Mitogen-activated protein kinase kinase kinase kinase 3 (Map4k3) from Mus musculus (Mouse).